Consider the following 90-residue polypeptide: DNA-binding protein HU-alpha (90 aa).

Belongs to the bacterial histone-like protein family. Heterodimer of an alpha and a beta chain.

In terms of biological role, histone-like DNA-binding protein which is capable of wrapping DNA to stabilize it, and thus to prevent its denaturation under extreme environmental conditions. The chain is DNA-binding protein HU-alpha (hupA) from Salmonella typhi.